We begin with the raw amino-acid sequence, 93 residues long: Small ribosomal subunit protein uS19 (93 aa).

The protein belongs to the universal ribosomal protein uS19 family.

Protein S19 forms a complex with S13 that binds strongly to the 16S ribosomal RNA. The chain is Small ribosomal subunit protein uS19 from Clostridium perfringens (strain ATCC 13124 / DSM 756 / JCM 1290 / NCIMB 6125 / NCTC 8237 / Type A).